Here is a 191-residue protein sequence, read N- to C-terminus: Shikimate kinase (191 aa).

Residue 24–29 participates in ATP binding; sequence GSGKTS. Mg(2+) is bound at residue T28. The substrate site is built by D46, R70, and G92. ATP is bound at residue R130. Substrate is bound at residue R149.

This sequence belongs to the shikimate kinase family. In terms of assembly, monomer. It depends on Mg(2+) as a cofactor.

Its subcellular location is the cytoplasm. It catalyses the reaction shikimate + ATP = 3-phosphoshikimate + ADP + H(+). It functions in the pathway metabolic intermediate biosynthesis; chorismate biosynthesis; chorismate from D-erythrose 4-phosphate and phosphoenolpyruvate: step 5/7. Its function is as follows. Catalyzes the specific phosphorylation of the 3-hydroxyl group of shikimic acid using ATP as a cosubstrate. This chain is Shikimate kinase, found in Parasynechococcus marenigrum (strain WH8102).